The chain runs to 130 residues: Albumin-1 B (130 aa).

The N-terminal stretch at 1–26 (MASVKLASLMVLFATLGMFLTKNVGA) is a signal peptide. 3 disulfide bridges follow: cysteine 29–cysteine 46, cysteine 33–cysteine 48, and cysteine 41–cysteine 58. 2 propeptides span residues 64–69 (VFLRTN) and 123–130 (LLKSVSTA).

Post-translationally, the C-terminal glycine may be removed from PA1b. In terms of tissue distribution, major component of both the cotyledons and embryonic axes of mature seeds.

In terms of biological role, PA1b binds to basic 7S globulin (BG) and stimulates its phosphorylation activity. Involved in the signal transduction system to regulate the growth and differentiation as a hormone peptide. Toxic to various insects through binding to a high affinity binding site in the insect gut. This chain is Albumin-1 B, found in Pisum sativum (Garden pea).